A 690-amino-acid polypeptide reads, in one-letter code: Methionine--tRNA ligase (690 aa).

Residues P20–H30 carry the 'HIGH' region motif. Zn(2+) contacts are provided by C151, C154, C164, and C167. The 'KMSKS' region signature appears at K337 to S341. K340 provides a ligand contact to ATP. The region spanning D589–M690 is the tRNA-binding domain.

This sequence belongs to the class-I aminoacyl-tRNA synthetase family. MetG type 1 subfamily. Homodimer. Requires Zn(2+) as cofactor.

It is found in the cytoplasm. The enzyme catalyses tRNA(Met) + L-methionine + ATP = L-methionyl-tRNA(Met) + AMP + diphosphate. Functionally, is required not only for elongation of protein synthesis but also for the initiation of all mRNA translation through initiator tRNA(fMet) aminoacylation. The sequence is that of Methionine--tRNA ligase from Vibrio vulnificus (strain YJ016).